We begin with the raw amino-acid sequence, 581 residues long: Membrane protein insertase YidC (581 aa).

The helical transmembrane segment at 7-27 (ILIVALAVVSYLMVLQWNEDY) threads the bilayer. The segment at 41–62 (AATPALPDTPADTASTGGDDIP) is disordered. Helical transmembrane passes span 365 to 385 (TVDY…LEVI), 388 to 408 (LLGN…LIFF), 458 to 478 (LGGC…YWVL), 489 to 509 (WMFW…PIIM), and 536 to 556 (PIIF…YWVV).

The protein belongs to the OXA1/ALB3/YidC family. Type 1 subfamily. As to quaternary structure, interacts with the Sec translocase complex via SecD. Specifically interacts with transmembrane segments of nascent integral membrane proteins during membrane integration.

It localises to the cell inner membrane. Required for the insertion and/or proper folding and/or complex formation of integral membrane proteins into the membrane. Involved in integration of membrane proteins that insert both dependently and independently of the Sec translocase complex, as well as at least some lipoproteins. Aids folding of multispanning membrane proteins. The protein is Membrane protein insertase YidC of Ectopseudomonas mendocina (strain ymp) (Pseudomonas mendocina).